Here is an 85-residue protein sequence, read N- to C-terminus: DNA-directed RNA polymerase subunit beta'' (85 aa).

This sequence belongs to the RNA polymerase beta' chain family. RpoC2 subfamily. In plastids the minimal PEP RNA polymerase catalytic core is composed of four subunits: alpha, beta, beta', and beta''. When a (nuclear-encoded) sigma factor is associated with the core the holoenzyme is formed, which can initiate transcription.

It localises to the plastid. Its subcellular location is the chloroplast. It catalyses the reaction RNA(n) + a ribonucleoside 5'-triphosphate = RNA(n+1) + diphosphate. DNA-dependent RNA polymerase catalyzes the transcription of DNA into RNA using the four ribonucleoside triphosphates as substrates. The protein is DNA-directed RNA polymerase subunit beta'' (rpoC2) of Galdieria sulphuraria (Red alga).